A 322-amino-acid polypeptide reads, in one-letter code: Uracil-DNA glycosylase (322 aa).

Residue D142 is the Proton acceptor of the active site.

It belongs to the uracil-DNA glycosylase (UDG) superfamily. UNG family.

It is found in the mitochondrion. The protein localises to the nucleus. It carries out the reaction Hydrolyzes single-stranded DNA or mismatched double-stranded DNA and polynucleotides, releasing free uracil.. Its function is as follows. Excises uracil residues from the DNA which can arise as a result of misincorporation of dUMP residues by DNA polymerase or due to deamination of cytosine. The polypeptide is Uracil-DNA glycosylase (ung1) (Schizosaccharomyces pombe (strain 972 / ATCC 24843) (Fission yeast)).